The sequence spans 226 residues: Ribose-5-phosphate isomerase A (226 aa).

Substrate contacts are provided by residues 32–35 (TGST), 85–88 (DGAD), and 98–101 (KGGG). The active-site Proton acceptor is the E107. Position 125 (K125) interacts with substrate.

It belongs to the ribose 5-phosphate isomerase family. In terms of assembly, homodimer.

The enzyme catalyses aldehydo-D-ribose 5-phosphate = D-ribulose 5-phosphate. It functions in the pathway carbohydrate degradation; pentose phosphate pathway; D-ribose 5-phosphate from D-ribulose 5-phosphate (non-oxidative stage): step 1/1. In terms of biological role, catalyzes the reversible conversion of ribose-5-phosphate to ribulose 5-phosphate. This chain is Ribose-5-phosphate isomerase A, found in Saccharophagus degradans (strain 2-40 / ATCC 43961 / DSM 17024).